Reading from the N-terminus, the 319-residue chain is MTDKPKLHILLCAPRGFCAGVVRAIDAVEQALRLYGAPVYVRHEIVHNKFVVEGLKAKGAIFVEELDEVPDTDKPVIFSAHGVPKSIPAEAQSRNIFAIDATCPLVTKVHREAELHHNNGRQVLLVGHAGHPEVVGTLGQLPEGSILLVQTPGEIETLQVKDEKNLAYVTQTTLSVDDTRNMVEALTKRFPEIIGPHREDICYATTNRQEAVKRIAPIVDALLVVGSSNSSNSQRLREVAERSGCKLARLVLRADDVEWDLFSNISSLGITAGASAPEVLVEEIMAAFAERFELEVETVSTADEGVFFPLPRELRQAAS.

Cys-18 is a binding site for [4Fe-4S] cluster. (2E)-4-hydroxy-3-methylbut-2-enyl diphosphate is bound by residues His-47 and His-81. Dimethylallyl diphosphate-binding residues include His-47 and His-81. The isopentenyl diphosphate site is built by His-47 and His-81. Cys-103 contributes to the [4Fe-4S] cluster binding site. His-131 provides a ligand contact to (2E)-4-hydroxy-3-methylbut-2-enyl diphosphate. Residue His-131 participates in dimethylallyl diphosphate binding. His-131 is an isopentenyl diphosphate binding site. The Proton donor role is filled by Glu-133. A (2E)-4-hydroxy-3-methylbut-2-enyl diphosphate-binding site is contributed by Thr-172. Cys-202 contacts [4Fe-4S] cluster. Residues Ser-230, Ser-231, Asn-232, and Ser-275 each contribute to the (2E)-4-hydroxy-3-methylbut-2-enyl diphosphate site. Dimethylallyl diphosphate is bound by residues Ser-230, Ser-231, Asn-232, and Ser-275. 4 residues coordinate isopentenyl diphosphate: Ser-230, Ser-231, Asn-232, and Ser-275.

This sequence belongs to the IspH family. [4Fe-4S] cluster is required as a cofactor.

The enzyme catalyses isopentenyl diphosphate + 2 oxidized [2Fe-2S]-[ferredoxin] + H2O = (2E)-4-hydroxy-3-methylbut-2-enyl diphosphate + 2 reduced [2Fe-2S]-[ferredoxin] + 2 H(+). It carries out the reaction dimethylallyl diphosphate + 2 oxidized [2Fe-2S]-[ferredoxin] + H2O = (2E)-4-hydroxy-3-methylbut-2-enyl diphosphate + 2 reduced [2Fe-2S]-[ferredoxin] + 2 H(+). The protein operates within isoprenoid biosynthesis; dimethylallyl diphosphate biosynthesis; dimethylallyl diphosphate from (2E)-4-hydroxy-3-methylbutenyl diphosphate: step 1/1. Its pathway is isoprenoid biosynthesis; isopentenyl diphosphate biosynthesis via DXP pathway; isopentenyl diphosphate from 1-deoxy-D-xylulose 5-phosphate: step 6/6. Its function is as follows. Catalyzes the conversion of 1-hydroxy-2-methyl-2-(E)-butenyl 4-diphosphate (HMBPP) into a mixture of isopentenyl diphosphate (IPP) and dimethylallyl diphosphate (DMAPP). Acts in the terminal step of the DOXP/MEP pathway for isoprenoid precursor biosynthesis. This Beijerinckia indica subsp. indica (strain ATCC 9039 / DSM 1715 / NCIMB 8712) protein is 4-hydroxy-3-methylbut-2-enyl diphosphate reductase.